A 361-amino-acid polypeptide reads, in one-letter code: Monodechloroaminopyrrolnitrin synthase PrnB (361 aa).

222 to 225 (PGAV) is a binding site for substrate. Position 313 (His313) interacts with heme. Positions 321 and 332 each coordinate substrate.

It belongs to the PrnB family. In terms of assembly, monomer. Heme b is required as a cofactor.

It carries out the reaction 7-chloro-L-tryptophan + AH2 + O2 = monodechloroaminopyrrolnitrin + A + CO2 + 2 H2O. Its pathway is antibiotic biosynthesis. Functionally, involved in the biosynthesis of the antifungal antibiotic pyrrolnitrin. Catalyzes the ring rearrangement and decarboxylation to convert 7-chloro-L-tryptophan (7-CLT) to monodechloroaminopyrrolnitrin (MDA). It can also use 7-chloro-D-tryptophan, but 7-chloro-L-tryptophan is the preferred natural enantiomer. The polypeptide is Monodechloroaminopyrrolnitrin synthase PrnB (prnB) (Pseudomonas fluorescens).